We begin with the raw amino-acid sequence, 290 residues long: Acetylglutamate kinase (290 aa).

Residues 65 to 66 (GG), Arg-87, and Asn-186 contribute to the substrate site.

The protein belongs to the acetylglutamate kinase family. ArgB subfamily.

The protein localises to the cytoplasm. It catalyses the reaction N-acetyl-L-glutamate + ATP = N-acetyl-L-glutamyl 5-phosphate + ADP. Its pathway is amino-acid biosynthesis; L-arginine biosynthesis; N(2)-acetyl-L-ornithine from L-glutamate: step 2/4. In terms of biological role, catalyzes the ATP-dependent phosphorylation of N-acetyl-L-glutamate. The protein is Acetylglutamate kinase of Mycolicibacterium gilvum (strain PYR-GCK) (Mycobacterium gilvum (strain PYR-GCK)).